The chain runs to 425 residues: Serine--tRNA ligase (425 aa).

Residue 226–228 (TSE) participates in L-serine binding. ATP is bound by residues 257–259 (RRE) and Val273. Glu280 contributes to the L-serine binding site. Residue 344–347 (ELTS) participates in ATP binding. An L-serine-binding site is contributed by Thr382.

This sequence belongs to the class-II aminoacyl-tRNA synthetase family. Type-1 seryl-tRNA synthetase subfamily. Homodimer. The tRNA molecule binds across the dimer.

It is found in the cytoplasm. It catalyses the reaction tRNA(Ser) + L-serine + ATP = L-seryl-tRNA(Ser) + AMP + diphosphate + H(+). It carries out the reaction tRNA(Sec) + L-serine + ATP = L-seryl-tRNA(Sec) + AMP + diphosphate + H(+). It participates in aminoacyl-tRNA biosynthesis; selenocysteinyl-tRNA(Sec) biosynthesis; L-seryl-tRNA(Sec) from L-serine and tRNA(Sec): step 1/1. Functionally, catalyzes the attachment of serine to tRNA(Ser). Is also able to aminoacylate tRNA(Sec) with serine, to form the misacylated tRNA L-seryl-tRNA(Sec), which will be further converted into selenocysteinyl-tRNA(Sec). The polypeptide is Serine--tRNA ligase (Mycobacterium avium (strain 104)).